Reading from the N-terminus, the 667-residue chain is MSSRLFVFFLICYATADKIEKELISDGFQLFTWKWDDVHHVYVITVWLLIASLAKILFNLMKPISKWCPDSSLLIIVGLALGWILHQTSLSGATLDSHTFFLYLLPPIIFDAGYFMPNRALFENFDSVLVFSVFGTIWNTFAIGGSLLLMAQYDLFTMSFTTFEILVFSALISAVDPVAVIAVFEEIHVNEFLFINVFGEALFNDGVTVVLYQMFKSFALIGSENLSVLDYATGGLSFFVVALGGAAVGIIFAIAASLTTKYTYDVRILAPVFIFVLPYMAYLTAEMVSLSSIIAIAICGMLMKQYIKGNVTQAAANSVKYFTKMLAQSSETVIFMFLGLSTISSQHHFDLYFICATLFFCLIYRAIGIVVQCYILNRFRAKKFEMVDQFIMSYGGLRGAIAYGLVVSIPASITAKPMFITATIAVIYFTVFLQGITIRPLVNFLKIKKKEERDPTMVESVYNKYLDYMMSGVEDIAGQKGHYTFIENFERFNAKVIKPVLMRHQKRESFDASSIVRAYEKITLEDAIKLAKVKNNIQNKRLERIKSKGRVAPILPDKISNQKTMTPKDLQLKRFMESGENIDSLYTLFSDLLDRKLHEMNRPSVQITDVDGQDDIQDDYMAEVGSRSNLSAMFRSTEQLPSETPFHSGRRQSTGDLNATRRADFNV.

A run of 8 helical transmembrane segments spans residues 41-61, 73-93, 97-117, 128-148, 165-185, 192-212, 236-256, and 268-288; these read VYVI…FNLM, LLII…LSGA, SHTF…YFMP, VLVF…GSLL, ILVF…AVFE, FLFI…VVLY, LSFF…AIAA, and ILAP…AEMV. Asparagine 310 is a glycosylation site (N-linked (GlcNAc...) asparagine). 4 helical membrane passes run 325–345, 351–371, 390–410, and 418–438; these read MLAQ…TISS, LYFI…GIVV, FIMS…VSIP, and MFIT…GITI. A disordered region spans residues 637 to 667; sequence TEQLPSETPFHSGRRQSTGDLNATRRADFNV. Position 644 is a phosphothreonine (threonine 644).

The protein belongs to the monovalent cation:proton antiporter 1 (CPA1) transporter (TC 2.A.36) family. Phosphorylated. In terms of tissue distribution, in early stage larva, expressed in the twin excretory cell processes. At later larval stages, expression is more restricted, resulting in a 'beads on a chain' appearance.

The protein resides in the cell membrane. In terms of biological role, serves some physiological function other than regulation of cellular pH. The chain is Probable Na(+)/H(+) antiporter nhx-9 (nhx-9) from Caenorhabditis elegans.